The chain runs to 445 residues: UPF0210 protein LACR_1020 (445 aa).

It belongs to the UPF0210 family. Homodimer.

The protein is UPF0210 protein LACR_1020 of Lactococcus lactis subsp. cremoris (strain SK11).